A 181-amino-acid polypeptide reads, in one-letter code: UPF0232 protein MAP_0004 (181 aa).

The segment covering 1 to 11 (MSDDQSPSPSG) has biased composition (polar residues). Disordered regions lie at residues 1 to 70 (MSDD…PQPL) and 161 to 181 (APSWRKGPRHIAGRGPRDTYG). Positions 18–39 (LVRRTLEEARAAARAQGKDAGR) are enriched in basic and acidic residues. The segment covering 40-50 (GRAAAPTPRRV) has biased composition (low complexity).

The protein belongs to the UPF0232 family.

The sequence is that of UPF0232 protein MAP_0004 from Mycolicibacterium paratuberculosis (strain ATCC BAA-968 / K-10) (Mycobacterium paratuberculosis).